A 366-amino-acid chain; its full sequence is tRNA/tmRNA (uracil-C(5))-methyltransferase (366 aa).

S-adenosyl-L-methionine is bound by residues Gln190, Tyr218, Asn223, Glu239, and Asp299. Cys324 functions as the Nucleophile in the catalytic mechanism. Catalysis depends on Glu358, which acts as the Proton acceptor.

It belongs to the class I-like SAM-binding methyltransferase superfamily. RNA M5U methyltransferase family. TrmA subfamily.

It catalyses the reaction uridine(54) in tRNA + S-adenosyl-L-methionine = 5-methyluridine(54) in tRNA + S-adenosyl-L-homocysteine + H(+). It carries out the reaction uridine(341) in tmRNA + S-adenosyl-L-methionine = 5-methyluridine(341) in tmRNA + S-adenosyl-L-homocysteine + H(+). In terms of biological role, dual-specificity methyltransferase that catalyzes the formation of 5-methyluridine at position 54 (m5U54) in all tRNAs, and that of position 341 (m5U341) in tmRNA (transfer-mRNA). The protein is tRNA/tmRNA (uracil-C(5))-methyltransferase of Edwardsiella ictaluri (strain 93-146).